The chain runs to 504 residues: Plasma protease C1 inhibitor (504 aa).

The N-terminal stretch at 1 to 22 (MASKLTPLTLLLLLLAGDRAFS) is a signal peptide. Residues 23 to 75 (DSEVTSHSSQDPLVVQEGSRDSVPERDGSRSPIEHTGQSSTWPTTSGSTKISN) form a disordered region. Residues 24–33 (SEVTSHSSQD) show a composition bias toward polar residues. Residues 40 to 55 (GSRDSVPERDGSRSPI) are compositionally biased toward basic and acidic residues. Residues 58–75 (TGQSSTWPTTSGSTKISN) show a composition bias toward polar residues. N-linked (GlcNAc...) asparagine glycosylation is found at N75, N83, N107, N243, and N356. A disordered region spans residues 94–132 (AQLPEDSPSQSPVNSSSPPSTASAPPTQAPTEPLCPEPL). Residues 100–125 (SPSQSPVNSSSPPSTASAPPTQAPTE) are compositionally biased toward low complexity.

Belongs to the serpin family. In terms of assembly, interacts with MASP1.

Its subcellular location is the secreted. Functionally, serine protease inhibitor, which acrs as a regulator of the classical complement pathway. Forms a proteolytically inactive stoichiometric complex with the C1r or C1s proteases. May also regulate blood coagulation, fibrinolysis and the generation of kinins. Very efficient inhibitor of FXIIa. Inhibits chymotrypsin and kallikrein. The protein is Plasma protease C1 inhibitor (Serping1) of Rattus norvegicus (Rat).